The sequence spans 102 residues: Omega-hexatoxin-Hi2b (102 aa).

A signal peptide spans 1 to 23; sequence MKFSKLSLTLALILTQAIFVLCG. Positions 24–56 are excised as a propeptide; sequence KINEDFMENGLESHALHDEIRKPIDTEKADAER. 3 disulfide bridges follow: C61–C75, C68–C81, and C74–C86. L98 is subject to Leucine amide. A propeptide spanning residues 100 to 102 is cleaved from the precursor; the sequence is RAL.

The protein belongs to the neurotoxin 15 family. 02 (omega-actx) subfamily. In terms of tissue distribution, expressed by the venom gland.

The protein resides in the secreted. In terms of biological role, potent inhibitor of insect, but not mammalian, voltage-gated calcium channels (Cav). The sequence is that of Omega-hexatoxin-Hi2b from Hadronyche infensa (Fraser island funnel-web spider).